The following is a 202-amino-acid chain: Xanthine phosphoribosyltransferase (202 aa).

Xanthine contacts are provided by leucine 20 and asparagine 27. 128–132 (ANGEA) is a binding site for 5-phospho-alpha-D-ribose 1-diphosphate. Lysine 156 is a xanthine binding site.

The protein belongs to the purine/pyrimidine phosphoribosyltransferase family. Xpt subfamily. In terms of assembly, homodimer.

Its subcellular location is the cytoplasm. The enzyme catalyses XMP + diphosphate = xanthine + 5-phospho-alpha-D-ribose 1-diphosphate. It functions in the pathway purine metabolism; XMP biosynthesis via salvage pathway; XMP from xanthine: step 1/1. Converts the preformed base xanthine, a product of nucleic acid breakdown, to xanthosine 5'-monophosphate (XMP), so it can be reused for RNA or DNA synthesis. The sequence is that of Xanthine phosphoribosyltransferase from Alkaliphilus metalliredigens (strain QYMF).